Here is a 208-residue protein sequence, read N- to C-terminus: 2-phospho-L-lactate guanylyltransferase (208 aa).

Belongs to the CofC family. As to quaternary structure, homodimer.

The catalysed reaction is (2S)-2-phospholactate + GTP + H(+) = (2S)-lactyl-2-diphospho-5'-guanosine + diphosphate. It functions in the pathway cofactor biosynthesis; coenzyme F420 biosynthesis. Guanylyltransferase that catalyzes the activation of (2S)-2-phospholactate (2-PL) as (2S)-lactyl-2-diphospho-5'-guanosine, via the condensation of 2-PL with GTP. It is involved in the biosynthesis of coenzyme F420, a hydride carrier cofactor. This chain is 2-phospho-L-lactate guanylyltransferase, found in Methanosarcina barkeri (strain Fusaro / DSM 804).